The primary structure comprises 263 residues: R-spondin-1 (263 aa).

The N-terminal stretch at 1–20 (MRLGLCVVALVLSWTHLTIS) is a signal peptide. 2 FU repeats span residues 34 to 85 (AEGS…GYFD) and 91 to 135 (MNKC…GSSA). Intrachain disulfides connect C40-C47, C44-C53, C56-C75, C79-C94, C97-C105, C102-C111, C114-C125, C129-C142, C148-C190, C159-C166, and C199-C206. N137 carries N-linked (GlcNAc...) asparagine glycosylation. Residues 147–207 (QCEMSEWSPW…RCTVRRVPCP (61 aa)) form the TSP type-1 domain. C-linked (Man) tryptophan glycans are attached at residues W153 and W156. The segment at 206–263 (CPEGQKRRKGGQGRRENANRNLARKESKEAGAGSRRRKGQQQQQQQGTVGPLTSAGPA) is disordered. Over residues 218-234 (GRRENANRNLARKESKE) the composition is skewed to basic and acidic residues.

It belongs to the R-spondin family. In terms of assembly, interacts with the extracellular domain of FZD8 and LRP6. It however does not form a ternary complex with FZD8 and LRP6. Interacts with WNT1. Binds heparin. Interacts with ZNRF3; promoting indirect interaction between ZNRF3 and LGR4 and membrane clearance of ZNRF3. Interacts with LGR4, LGR5 and LGR6. Identified in a complex composed of RNF43, LGR5 and RSPO1. Interacts (via FU repeats) with KREM1. Post-translationally, C-, and N-glycosylated. N-glycosylation at Asn-137, negatively influences its secretion and enhancing effect on Wnt/beta-catenin signaling. C-mannosylation at Trp-156 by DPY19L3 is required for its secretion and regulates the enhancing activity of Wnt signaling. In terms of tissue distribution, abundantly expressed in adrenal glands, ovary, testis, thyroid and trachea but not in bone marrow, spinal cord, stomach, leukocytes colon, small intestine, prostate, thymus and spleen.

It is found in the secreted. Its subcellular location is the nucleus. In terms of biological role, activator of the canonical Wnt signaling pathway by acting as a ligand for LGR4-6 receptors. Upon binding to LGR4-6 (LGR4, LGR5 or LGR6), LGR4-6 associate with phosphorylated LRP6 and frizzled receptors that are activated by extracellular Wnt receptors, triggering the canonical Wnt signaling pathway to increase expression of target genes. Also regulates the canonical Wnt/beta-catenin-dependent pathway and non-canonical Wnt signaling by acting as an inhibitor of ZNRF3, an important regulator of the Wnt signaling pathway. Acts as a ligand for frizzled FZD8 and LRP6. May negatively regulate the TGF-beta pathway. Has a essential roles in ovary determination. Regulates Wnt signaling by antagonizing DKK1/KREM1-mediated internalization of LRP6 through an interaction with KREM1. The sequence is that of R-spondin-1 (RSPO1) from Homo sapiens (Human).